Here is a 150-residue protein sequence, read N- to C-terminus: UPF0178 protein Shew_2726 (150 aa).

This sequence belongs to the UPF0178 family.

The sequence is that of UPF0178 protein Shew_2726 from Shewanella loihica (strain ATCC BAA-1088 / PV-4).